Here is a 358-residue protein sequence, read N- to C-terminus: UPF0575 protein C19orf67 (358 aa).

Residues 1–84 (MATEQWFEGS…PGPAPPRLSL (84 aa)) are disordered. Composition is skewed to pro residues over residues 17–32 (ETPP…PPCG) and 70–80 (PLVPRPGPAPP).

The protein belongs to the UPF0575 family.

The protein is UPF0575 protein C19orf67 (C19orf67) of Homo sapiens (Human).